The following is a 269-amino-acid chain: Phosphoribosylformylglycinamidine synthase subunit PurQ (269 aa).

Residues 5–262 enclose the Glutamine amidotransferase type-1 domain; sequence VLVMSGYGIN…IESNLQIFKN (258 aa). Cysteine 95 acts as the Nucleophile in catalysis. Catalysis depends on residues histidine 222, glutamate 224, and glutamate 232.

Part of the FGAM synthase complex composed of 1 PurL, 1 PurQ and 2 PurS subunits.

The protein resides in the cytoplasm. The catalysed reaction is N(2)-formyl-N(1)-(5-phospho-beta-D-ribosyl)glycinamide + L-glutamine + ATP + H2O = 2-formamido-N(1)-(5-O-phospho-beta-D-ribosyl)acetamidine + L-glutamate + ADP + phosphate + H(+). It carries out the reaction L-glutamine + H2O = L-glutamate + NH4(+). It functions in the pathway purine metabolism; IMP biosynthesis via de novo pathway; 5-amino-1-(5-phospho-D-ribosyl)imidazole from N(2)-formyl-N(1)-(5-phospho-D-ribosyl)glycinamide: step 1/2. Functionally, part of the phosphoribosylformylglycinamidine synthase complex involved in the purines biosynthetic pathway. Catalyzes the ATP-dependent conversion of formylglycinamide ribonucleotide (FGAR) and glutamine to yield formylglycinamidine ribonucleotide (FGAM) and glutamate. The FGAM synthase complex is composed of three subunits. PurQ produces an ammonia molecule by converting glutamine to glutamate. PurL transfers the ammonia molecule to FGAR to form FGAM in an ATP-dependent manner. PurS interacts with PurQ and PurL and is thought to assist in the transfer of the ammonia molecule from PurQ to PurL. This Methanococcus maripaludis (strain C5 / ATCC BAA-1333) protein is Phosphoribosylformylglycinamidine synthase subunit PurQ.